The primary structure comprises 444 residues: MFS-type transporter dbaD (444 aa).

Residues 1-13 (MTEQPPQNHSVDL) are compositionally biased toward polar residues. The segment at 1-57 (MTEQPPQNHSVDLNQNEDNNENDYRSSSATDAERPCEPKIEESTAKPPTGPPAPPPP) is disordered. Residue N8 is glycosylated (N-linked (GlcNAc...) asparagine). Basic and acidic residues predominate over residues 31–44 (DAERPCEPKIEEST). The span at 48 to 57 (PTGPPAPPPP) shows a compositional bias: pro residues. The next 11 helical transmembrane spans lie at 62 to 82 (LVAW…WGIM), 107 to 127 (WIGS…GSIY), 134 to 154 (ALLV…SLCK), 159 to 179 (VLLA…VPCV), 192 to 212 (TALG…PIVL), 223 to 243 (WSVR…IAVM), 267 to 287 (MAFT…LFYI), 301 to 323 (MAFY…PNAM), 330 to 350 (FNLI…LLAV), 356 to 376 (LIVI…LPPL), and 394 to 414 (MGFG…GAIL). N421 carries an N-linked (GlcNAc...) asparagine glycan. The chain crosses the membrane as a helical span at residues 424–444 (GLWVYGGVTSLVAGFIICIAV).

The protein belongs to the major facilitator superfamily. Monocarboxylate porter (TC 2.A.1.13) family.

Its subcellular location is the cell membrane. Functionally, MFS-type transporter; part of the gene cluster that mediates the biosynthesis of the antibiotic 2,4- dihydroxy-3-methyl-6-(2-oxopropyl)benzaldehyde (DHMBA) and its derivatives. Is probably involved in the transport of the metabolites to the environment. The polypeptide is MFS-type transporter dbaD (Emericella nidulans (strain FGSC A4 / ATCC 38163 / CBS 112.46 / NRRL 194 / M139) (Aspergillus nidulans)).